A 254-amino-acid chain; its full sequence is Flavin-dependent thymidylate synthase (254 aa).

Positions 7–237 (LRVQLIARTE…PAVFADFEIY (231 aa)) constitute a ThyX domain. Residues S71, 95–97 (RHR), and Q103 each bind FAD. Residues 92-95 (ELIR), 103-107 (QLSQR), and R176 contribute to the dUMP site. Residues 95–105 (RHRHFSYSQLS) carry the ThyX motif motif. Residues 192–194 (NYR) and H198 contribute to the FAD site. R203 contacts dUMP. R203 serves as the catalytic Involved in ionization of N3 of dUMP, leading to its activation.

This sequence belongs to the thymidylate synthase ThyX family. As to quaternary structure, homotetramer. It depends on FAD as a cofactor.

The enzyme catalyses dUMP + (6R)-5,10-methylene-5,6,7,8-tetrahydrofolate + NADPH + H(+) = dTMP + (6S)-5,6,7,8-tetrahydrofolate + NADP(+). It functions in the pathway pyrimidine metabolism; dTTP biosynthesis. Catalyzes the reductive methylation of 2'-deoxyuridine-5'-monophosphate (dUMP) to 2'-deoxythymidine-5'-monophosphate (dTMP) while utilizing 5,10-methylenetetrahydrofolate (mTHF) as the methyl donor, and NADPH and FADH(2) as the reductant. This Mycobacterium sp. (strain JLS) protein is Flavin-dependent thymidylate synthase.